Reading from the N-terminus, the 80-residue chain is Adipogenin (80 aa).

The helical transmembrane segment at 14–34 (FSFLVFWFCLPVGLLLLLIIW) threads the bilayer.

The protein belongs to the adipogenin family.

The protein localises to the membrane. Its subcellular location is the nucleus. Functionally, plays a role in stimulating adipocyte differentiation and development. This Homo sapiens (Human) protein is Adipogenin.